We begin with the raw amino-acid sequence, 677 residues long: Methionine--tRNA ligase (677 aa).

The 'HIGH' region motif lies at 15–25 (PYANGSIHLGH). Zn(2+) is bound by residues C146, C149, C159, and C162. The 'KMSKS' region signature appears at 333–337 (KMSKS). K336 contacts ATP. In terms of domain architecture, tRNA-binding spans 575 to 677 (DFAKIDLRVA…DGAKPGQQVK (103 aa)).

The protein belongs to the class-I aminoacyl-tRNA synthetase family. MetG type 1 subfamily. Homodimer. It depends on Zn(2+) as a cofactor.

It localises to the cytoplasm. The enzyme catalyses tRNA(Met) + L-methionine + ATP = L-methionyl-tRNA(Met) + AMP + diphosphate. In terms of biological role, is required not only for elongation of protein synthesis but also for the initiation of all mRNA translation through initiator tRNA(fMet) aminoacylation. This chain is Methionine--tRNA ligase, found in Salmonella choleraesuis (strain SC-B67).